The primary structure comprises 394 residues: RNA demethylase ALKBH5 (394 aa).

2 disordered regions span residues 1 to 26 (MAAASGYTDLREKLKSMTSRDNYKAG) and 48 to 83 (AEPYAAPGVKRKYPEDSDPERSDFEEQQLQKEEEAR). The residue at position 2 (alanine 2) is an N-acetylalanine. A Glycyl lysine isopeptide (Lys-Gly) (interchain with G-Cter in ubiquitin) cross-link involves residue lysine 57. Basic and acidic residues predominate over residues 59–83 (KYPEDSDPERSDFEEQQLQKEEEAR). Phosphoserine is present on residues serine 64 and serine 69. Positions 67–116 (ERSDFEEQQLQKEEEARKVKSGIRQMRLFSQDECAKIEARIDEVVSRAEK) form a coiled coil. Lysine 86 participates in a covalent cross-link: Glycyl lysine isopeptide (Lys-Gly) (interchain with G-Cter in SUMO1). Residue serine 87 is modified to Phosphoserine. Residue lysine 132 is modified to N6-acetyllysine. Tyrosine 139 is a catalytic residue. Positions 193, 195, and 204 each coordinate 2-oxoglutarate. A disulfide bridge connects residues cysteine 230 and cysteine 267. Residue lysine 235 is modified to N6-acetyllysine. 2 residues coordinate 2-oxoglutarate: histidine 266 and arginine 277. Residues 298 to 394 (SSSVLPPSYA…PARKVKMRRH (97 aa)) form a disordered region. A Glycyl lysine isopeptide (Lys-Gly) (interchain with G-Cter in SUMO1) cross-link involves residue lysine 321. Serine 325 bears the Phosphoserine mark. Residue lysine 328 forms a Glycyl lysine isopeptide (Lys-Gly) (interchain with G-Cter in SUMO2) linkage. A compositionally biased stretch (basic and acidic residues) spans 328–349 (KADPDAAHRPRILEMDKEENRR). Residues serine 371 and serine 384 each carry the phosphoserine modification.

The protein belongs to the alkB family. Monomer. Interacts with RBM33; promoting desumoylation by SENP1 and recruitment to N(6)-methyladenosine-containing mRNAs. Interacts (when acetylated by KAT8) with PSPC1; interaction facilitates recognition of N(6)-methyladenosine (m6A) mRNA. It depends on Fe(2+) as a cofactor. In terms of processing, phosphorylated at Ser-87 and Ser-325 in response to reactive oxygen species (ROS), promoting sumoylation and inactivation. Post-translationally, acetylated by KAT8 at Lys-235, promoting interaction with PSPC1, thereby facilitating recognition of N(6)-methyladenosine (m6A) mRNA by ALKBH5. Deacetylated at Lys-235 by HDAC7. Sumoylated at Lys-86 and Lys-321 by PIAS4 following phosphorylation at Ser-87 and Ser-325 in response to reactive oxygen species (ROS), inhibiting the RNA demethylase activity. Desumoylated by SENP1; relieving RNA demethylase inhibition, leading to N(6)-methyladenosine-containing mRNAs demethylation. In terms of processing, ubiquitinated at Lys-57 via 'Lys-48'-linked polyubiquitin chain, leading to its degradation by the proteasome. Deubiquitinated at Lys-57 by USP9X, promoting its stabilizazion.

It is found in the nucleus speckle. It catalyses the reaction an N(6)-methyladenosine in mRNA + 2-oxoglutarate + O2 = an adenosine in mRNA + formaldehyde + succinate + CO2. RNA demethylase activity is inhibited following sumoylation. Inhibition is relieved following desumoylation. Functionally, dioxygenase that specifically demethylates N(6)-methyladenosine (m6A) RNA, the most prevalent internal modification of messenger RNA (mRNA) in higher eukaryotes. Demethylates RNA by oxidative demethylation, which requires molecular oxygen, alpha-ketoglutarate and iron. Demethylation of m6A mRNA affects mRNA processing, translation and export. Can also demethylate N(6)-methyladenosine in single-stranded DNA (in vitro). Required for the late meiotic and haploid phases of spermatogenesis by mediating m6A demethylation in spermatocytes and round spermatids: m6A demethylation of target transcripts is required for correct splicing and the production of longer 3'-UTR mRNAs in male germ cells. Involved in paraspeckle assembly, a nuclear membraneless organelle, by undergoing liquid-liquid phase separation. Paraspeckle assembly is coupled with m6A demethylation of RNAs, such as NEAT1 non-coding RNA. Also acts as a negative regulator of T-cell development: inhibits gamma-delta T-cell proliferation via demethylation of JAG1 and NOTCH2 transcripts. Inhibits regulatory T-cell (Treg) recruitment by mediating demethylation and destabilization of CCL28 mRNAs. The protein is RNA demethylase ALKBH5 (ALKBH5) of Bos taurus (Bovine).